We begin with the raw amino-acid sequence, 428 residues long: Secernin-2 (428 aa).

Residue cysteine 10 is part of the active site.

The protein belongs to the peptidase C69 family. Secernin subfamily.

The sequence is that of Secernin-2 (scrn2) from Xenopus laevis (African clawed frog).